We begin with the raw amino-acid sequence, 759 residues long: Hormone-sensitive lipase (759 aa).

Positions 349-351 (HGG) match the Involved in the stabilization of the negatively charged intermediate by the formation of the oxyanion hole motif. S423 is an active-site residue. Positions 534–553 (GRKPQKTTSPTAESVRPTES) are disordered. At S557 the chain carries Phosphoserine. Residue S559 is modified to Phosphoserine; by AMPK. A Phosphothreonine modification is found at T574. The segment at 583–604 (LSNSEPSDSPEMSQSMETLGPS) is disordered. The segment covering 585–604 (NSEPSDSPEMSQSMETLGPS) has biased composition (polar residues). S597, S618, S650, and S651 each carry phosphoserine. Active-site residues include D694 and H724.

This sequence belongs to the 'GDXG' lipolytic enzyme family. Monomer and homodimer. Interacts with CAVIN1 in the adipocyte cytoplasm. Interacts with PLIN5. Phosphorylation by AMPK reduces its translocation towards the lipid droplets.

It localises to the cell membrane. The protein resides in the membrane. The protein localises to the caveola. It is found in the cytoplasm. Its subcellular location is the cytosol. It localises to the lipid droplet. It catalyses the reaction a diacylglycerol + H2O = a monoacylglycerol + a fatty acid + H(+). The enzyme catalyses a triacylglycerol + H2O = a diacylglycerol + a fatty acid + H(+). It carries out the reaction a monoacylglycerol + H2O = glycerol + a fatty acid + H(+). The catalysed reaction is Hydrolyzes glycerol monoesters of long-chain fatty acids.. It catalyses the reaction cholesteryl (9Z-octadecenoate) + H2O = cholesterol + (9Z)-octadecenoate + H(+). The enzyme catalyses all-trans-retinyl hexadecanoate + H2O = all-trans-retinol + hexadecanoate + H(+). It carries out the reaction 1,2-di-(9Z-octadecenoyl)-glycerol + H2O = (9Z-octadecenoyl)-glycerol + (9Z)-octadecenoate + H(+). The catalysed reaction is 2-(5Z,8Z,11Z,14Z-eicosatetraenoyl)-glycerol + H2O = glycerol + (5Z,8Z,11Z,14Z)-eicosatetraenoate + H(+). It catalyses the reaction 1-(9Z-octadecenoyl)-glycerol + H2O = glycerol + (9Z)-octadecenoate + H(+). The enzyme catalyses 2-(9Z-octadecenoyl)-glycerol + H2O = glycerol + (9Z)-octadecenoate + H(+). It carries out the reaction 1-O-hexadecyl-2-acetyl-sn-glycerol + H2O = 1-O-hexadecyl-sn-glycerol + acetate + H(+). The catalysed reaction is 1,2-di-(9Z-octadecenoyl)-sn-glycerol + H2O = (9Z-octadecenoyl)-glycerol + (9Z)-octadecenoate + H(+). It catalyses the reaction 1,3-di-(9Z-octadecenoyl)-glycerol + H2O = 1-(9Z-octadecenoyl)-glycerol + (9Z)-octadecenoate + H(+). The enzyme catalyses 1,2-di-(9Z-octadecenoyl)-glycerol + (9Z)-octadecenoate + H(+) = 1,2,3-tri-(9Z-octadecenoyl)-glycerol + H2O. It carries out the reaction 2,3-di-(9Z)-octadecenoyl-sn-glycerol + H2O = 2-(9Z-octadecenoyl)-glycerol + (9Z)-octadecenoate + H(+). The catalysed reaction is 1,2,3-tri-(9Z-octadecenoyl)-glycerol + H2O = di-(9Z)-octadecenoylglycerol + (9Z)-octadecenoate + H(+). It catalyses the reaction 1,2-di-(9Z-octadecenoyl)-glycerol + H2O = 2-(9Z-octadecenoyl)-glycerol + (9Z)-octadecenoate + H(+). Its pathway is glycerolipid metabolism; triacylglycerol degradation. In terms of biological role, lipase with broad substrate specificity, catalyzing the hydrolysis of triacylglycerols (TAGs), diacylglycerols (DAGs), monoacylglycerols (MAGs), cholesteryl esters and retinyl esters. Shows a preferential hydrolysis of DAGs over TAGs and MAGs and of the fatty acid (FA) esters at the sn-1 and sn-2 positions of the glycerol backbone in TAGs. Preferentially hydrolyzes FA esters at the sn-3 position of the glycerol backbone in DAGs. Catalyzes the hydrolysis of 2-arachidonoylglycerol, an endocannabinoid and of 2-acetyl monoalkylglycerol ether, the penultimate precursor of the pathway for de novo synthesis of platelet-activating factor. In adipose tissue and heart, it primarily hydrolyzes stored triglycerides to free fatty acids, while in steroidogenic tissues, it principally converts cholesteryl esters to free cholesterol for steroid hormone production. The polypeptide is Hormone-sensitive lipase (Lipe) (Mus musculus (Mouse)).